The primary structure comprises 380 residues: Kappa-type opioid receptor (380 aa).

The Extracellular segment spans residues 1-57 (MESPIQIFRGEPGPTCAPSACLLPNSSSWFPNWAESDSNGSVGSEDQQLEPAHISPA). N-linked (GlcNAc...) asparagine glycosylation is found at asparagine 25 and asparagine 39. The chain crosses the membrane as a helical span at residues 58 to 85 (IPVIITAVYSVVFVVGLVGNSLVMFVII). At 86 to 95 (RYTKMKTATN) the chain is on the cytoplasmic side. The helical transmembrane segment at 96–119 (IYIFNLALADALVTTTMPFQSAVY) threads the bilayer. Residues 120–132 (LMNSWPFGDVLCK) are Extracellular-facing. Cysteines 131 and 210 form a disulfide. A helical transmembrane segment spans residues 133 to 154 (IVISIDYYNMFTSIFTLTMMSV). The Cytoplasmic segment spans residues 155–173 (DRYIAVCHPVKALDFRTPL). Residues 174 to 196 (KAKIINICIWLLASSVGISAIVL) form a helical membrane-spanning segment. Over 197 to 222 (GGTKVREDVDVIECSLQFPDDEYSWW) the chain is Extracellular. The helical transmembrane segment at 223 to 247 (DLFMKICVFVFAFVIPVLIIIVCYT) threads the bilayer. Residues 248–274 (LMILRLKSVRLLSGSREKDRNLRRITK) are Cytoplasmic-facing. Residues 275-296 (LVLVVVAVFIICWTPIHIFILV) form a helical membrane-spanning segment. At 297–311 (EALGSTSHSTAVLSS) the chain is on the extracellular side. The helical transmembrane segment at 312 to 333 (YYFCIALGYTNSSLNPVLYAFL) threads the bilayer. Residues 334 to 380 (DENFKRCFRDFCFPIKMRMERQSTNRVRNTVQDPASMRDVGGMNKPV) are Cytoplasmic-facing. A lipid anchor (S-palmitoyl cysteine) is attached at cysteine 345.

This sequence belongs to the G-protein coupled receptor 1 family. In terms of assembly, interacts with NHERF1. Interacts with GABARAPL1.

Its subcellular location is the cell membrane. G-protein coupled opioid receptor that functions as a receptor for endogenous alpha-neoendorphins and dynorphins, but has low affinity for beta-endorphins. Also functions as a receptor for various synthetic opioids and for the psychoactive diterpene salvinorin A. Ligand binding causes a conformation change that triggers signaling via guanine nucleotide-binding proteins (G proteins) and modulates the activity of down-stream effectors, such as adenylate cyclase. Signaling leads to the inhibition of adenylate cyclase activity. Inhibits neurotransmitter release by reducing calcium ion currents and increasing potassium ion conductance. Plays a role in the perception of pain. Plays a role in mediating reduced physical activity upon treatment with synthetic opioids. Plays a role in the regulation of salivation in response to synthetic opioids. May play a role in arousal and regulation of autonomic and neuroendocrine functions. This is Kappa-type opioid receptor (Oprk1) from Rattus norvegicus (Rat).